A 612-amino-acid polypeptide reads, in one-letter code: Dihydroxy-acid dehydratase (612 aa).

Aspartate 81 provides a ligand contact to Mg(2+). Cysteine 122 provides a ligand contact to [2Fe-2S] cluster. Mg(2+)-binding residues include aspartate 123 and lysine 124. Lysine 124 carries the N6-carboxylysine modification. Cysteine 193 lines the [2Fe-2S] cluster pocket. Glutamate 489 contacts Mg(2+). Serine 515 acts as the Proton acceptor in catalysis.

The protein belongs to the IlvD/Edd family. In terms of assembly, homodimer. The cofactor is [2Fe-2S] cluster. Requires Mg(2+) as cofactor.

The catalysed reaction is (2R)-2,3-dihydroxy-3-methylbutanoate = 3-methyl-2-oxobutanoate + H2O. The enzyme catalyses (2R,3R)-2,3-dihydroxy-3-methylpentanoate = (S)-3-methyl-2-oxopentanoate + H2O. Its pathway is amino-acid biosynthesis; L-isoleucine biosynthesis; L-isoleucine from 2-oxobutanoate: step 3/4. It participates in amino-acid biosynthesis; L-valine biosynthesis; L-valine from pyruvate: step 3/4. In terms of biological role, functions in the biosynthesis of branched-chain amino acids. Catalyzes the dehydration of (2R,3R)-2,3-dihydroxy-3-methylpentanoate (2,3-dihydroxy-3-methylvalerate) into 2-oxo-3-methylpentanoate (2-oxo-3-methylvalerate) and of (2R)-2,3-dihydroxy-3-methylbutanoate (2,3-dihydroxyisovalerate) into 2-oxo-3-methylbutanoate (2-oxoisovalerate), the penultimate precursor to L-isoleucine and L-valine, respectively. This chain is Dihydroxy-acid dehydratase, found in Pseudomonas paraeruginosa (strain DSM 24068 / PA7) (Pseudomonas aeruginosa (strain PA7)).